Reading from the N-terminus, the 239-residue chain is uncharacterized protein (239 aa).

4 helical membrane-spanning segments follow: residues 9–29 (LAIY…SQII), 65–85 (IIYL…YLFI), 94–114 (IILI…TFVV), and 167–187 (IYFA…MHWI).

Its subcellular location is the cell membrane. This is an uncharacterized protein from Methanocaldococcus jannaschii (strain ATCC 43067 / DSM 2661 / JAL-1 / JCM 10045 / NBRC 100440) (Methanococcus jannaschii).